Reading from the N-terminus, the 229-residue chain is Allatostatin-A (229 aa).

The signal sequence occupies residues 1 to 18; that stretch reads MLSTSLPVCFLVIGAALC. The propeptide occupies 19-48; it reads APERMQNDPDPHDSTAQGSDNHSDHIAPLA. The tract at residues 23 to 46 is disordered; sequence MQNDPDPHDSTAQGSDNHSDHIAP. L58 carries the leucine amide modification. A propeptide spanning residues 62-80 is cleaved from the precursor; sequence AYSYVSEYKRLPVYNFGLG. The residue at position 90 (L90) is a Leucine amide. The propeptide occupies 94–130; the sequence is SVDEDQTNDDQQQIMNNDLDQAALAEFFDQYDDAGYE. A Leucine amide modification is found at L140. Positions 144–152 are excised as a propeptide; sequence FADDDTSEE. Leucine amide occurs at positions 162, 173, 184, 196, and 210. The propeptide occupies 214–229; that stretch reads SADDASTEDSDNYFDV.

It belongs to the allatostatin family. In terms of tissue distribution, allatostatin-A-1: Expressed in antennal lobe (AL), corpora cardiaca (CC), corpora allata (CA) and gnathal ganglion (GNG) (at protein level). Expression in AL and GNG detected in most animals, in CC and CA in some animals (at protein level). Allatostatin-A-3: Expressed in antennal lobe (AL), corpora cardiaca (CC), corpora allata (CA) and gnathal ganglion (GNG) (at protein level). Expression in AL detected in all animals, in GNG, CC and CA in most animals (at protein level). Allatostatin-A-4: Expressed in antennal lobe (AL), corpora cardiaca (CC), corpora allata (CA) and gnathal ganglion (GNG) in all animals (at protein level). Allatostatin-A-5: Expressed in antennal lobe (AL), corpora cardiaca (CC), corpora allata (CA) and gnathal ganglion (GNG) in all animals (at protein level). Allatostatin-A-6: Expressed in antennal lobe (AL) and gnathal ganglion (GNG) (at protein level). Expression in AL detected in some animals, in GNG in few animals (at protein level). Not expressed in corpora cardiaca (CC) and corpora allata (CA) (at protein level). Allatostatin-A-7: Expressed in antennal lobe (AL), corpora cardiaca (CC), corpora allata (CA) and gnathal ganglion (GNG) (at protein level). Expression in AL detected in all animals, in GNG, CC and CA in most animals (at protein level). Allatostatin-A-8: Expressed in antennal lobe (AL), corpora cardiaca (CC), corpora allata (CA) and gnathal ganglion (GNG) (at protein level). Expression in AL detected in all animals, in GNG, CC and CA in most animals (at protein level). Allatostatin-A-9: Expressed in antennal lobe (AL), corpora cardiaca (CC), corpora allata (CA) and gnathal ganglion (GNG) (at protein level). Expression in AL detected in all animals, in GNG in most animals and in CC and CA in some animals (at protein level).

It is found in the secreted. Neuropeptide inhibitors of juvenile hormone synthesis and gut muscle contraction. In Agrotis ipsilon (Black cutworm moth), this protein is Allatostatin-A.